The primary structure comprises 501 residues: Ribose import ATP-binding protein RbsA (501 aa).

2 consecutive ABC transporter domains span residues 5-241 and 252-495; these read LQLK…VGRK and APGE…VGKL. 37-44 contributes to the ATP binding site; that stretch reads GENGAGKS.

Belongs to the ABC transporter superfamily. Ribose importer (TC 3.A.1.2.1) family. In terms of assembly, the complex is composed of an ATP-binding protein (RbsA), two transmembrane proteins (RbsC) and a solute-binding protein (RbsB).

The protein resides in the cell inner membrane. The enzyme catalyses D-ribose(out) + ATP + H2O = D-ribose(in) + ADP + phosphate + H(+). Its function is as follows. Part of the ABC transporter complex RbsABC involved in ribose import. Responsible for energy coupling to the transport system. The chain is Ribose import ATP-binding protein RbsA from Salmonella paratyphi A (strain ATCC 9150 / SARB42).